Reading from the N-terminus, the 456-residue chain is Kynurenine 3-monooxygenase (456 aa).

This sequence belongs to the aromatic-ring hydroxylase family. KMO subfamily. FAD is required as a cofactor.

The protein resides in the mitochondrion outer membrane. It catalyses the reaction L-kynurenine + NADPH + O2 + H(+) = 3-hydroxy-L-kynurenine + NADP(+) + H2O. It participates in cofactor biosynthesis; NAD(+) biosynthesis; quinolinate from L-kynurenine: step 1/3. Catalyzes the hydroxylation of L-kynurenine (L-Kyn) to form 3-hydroxy-L-kynurenine (L-3OHKyn). Required for synthesis of quinolinic acid. This chain is Kynurenine 3-monooxygenase, found in Candida albicans (strain SC5314 / ATCC MYA-2876) (Yeast).